Consider the following 185-residue polypeptide: Ribosome-recycling factor (185 aa).

Belongs to the RRF family.

The protein resides in the cytoplasm. In terms of biological role, responsible for the release of ribosomes from messenger RNA at the termination of protein biosynthesis. May increase the efficiency of translation by recycling ribosomes from one round of translation to another. The protein is Ribosome-recycling factor of Haemophilus ducreyi (strain 35000HP / ATCC 700724).